Consider the following 1160-residue polypeptide: Pesticidal crystal protein Cry1Db (1160 aa).

This sequence belongs to the delta endotoxin family.

Functionally, promotes colloidosmotic lysis by binding to the midgut epithelial cells of insects. The protein is Pesticidal crystal protein Cry1Db (cry1Db) of Bacillus thuringiensis.